The chain runs to 349 residues: ATP synthase subunit a-2 (349 aa).

A propeptide spanning residues methionine 1–proline 97 is cleaved from the precursor. The next 7 helical transmembrane spans lie at phenylalanine 118–isoleucine 138, phenylalanine 184–isoleucine 204, histidine 213–phenylalanine 233, phenylalanine 240–leucine 260, methionine 280–methionine 300, isoleucine 303–glutamate 323, and valine 326–isoleucine 346.

The protein belongs to the ATPase A chain family. In terms of assembly, F-type ATPases have 2 components, CF(1) - the catalytic core - and CF(0) - the membrane proton channel. CF(1) has five subunits: alpha(3), beta(3), gamma(1), delta(1), epsilon(1). CF(0) has three main subunits: a, b and c.

Its subcellular location is the mitochondrion inner membrane. In terms of biological role, mitochondrial membrane ATP synthase (F(1)F(0) ATP synthase or Complex V) produces ATP from ADP in the presence of a proton gradient across the membrane which is generated by electron transport complexes of the respiratory chain. F-type ATPases consist of two structural domains, F(1) - containing the extramembraneous catalytic core and F(0) - containing the membrane proton channel, linked together by a central stalk and a peripheral stalk. During catalysis, ATP synthesis in the catalytic domain of F(1) is coupled via a rotary mechanism of the central stalk subunits to proton translocation. Key component of the proton channel; it may play a direct role in the translocation of protons across the membrane. This chain is ATP synthase subunit a-2 (ATP6-2), found in Arabidopsis thaliana (Mouse-ear cress).